Consider the following 1101-residue polypeptide: Coiled-coil domain-containing protein 150 (1101 aa).

4 coiled-coil regions span residues 106–299 (RLES…DLTS), 398–680 (AAHA…KEDN), 712–940 (DSEI…NYEQ), and 970–1033 (VRNK…EAHR). Residues 1055-1071 (SGEDRWQEKDQDVKHDV) show a composition bias toward basic and acidic residues. The tract at residues 1055-1101 (SGEDRWQEKDQDVKHDVMSNQSVLHRWERKQNLRPMPKKYHSEVQRK) is disordered.

This is Coiled-coil domain-containing protein 150 (CCDC150) from Homo sapiens (Human).